The primary structure comprises 410 residues: Zinc finger protein 322 (410 aa).

8 consecutive C2H2-type zinc fingers follow at residues tyrosine 81–histidine 103, tyrosine 109–histidine 131, tyrosine 137–histidine 159, tyrosine 165–histidine 187, phenylalanine 193–histidine 215, tyrosine 221–histidine 243, tyrosine 249–histidine 271, and tyrosine 277–histidine 299. The C2H2-type 9; degenerate zinc finger occupies phenylalanine 303–histidine 325. The segment at tyrosine 361–histidine 383 adopts a C2H2-type 10; degenerate zinc-finger fold. Serine 400 is subject to Phosphoserine.

It belongs to the krueppel C2H2-type zinc-finger protein family. In terms of assembly, interacts with POU5F1.

The protein resides in the nucleus. It localises to the cytoplasm. In terms of biological role, transcriptional activator. Important for maintenance of pluripotency in embryonic stem cells. Binds directly to the POU5F1 distal enhancer and the NANOG proximal promoter, and enhances expression of both genes. Can also bind to numerous other gene promoters and regulates expression of many other pluripotency factors, either directly or indirectly. Promotes inhibition of MAPK signaling during embryonic stem cell differentiation. The chain is Zinc finger protein 322 (Znf322) from Mus musculus (Mouse).